A 692-amino-acid polypeptide reads, in one-letter code: MNGKEVSSGSGRTQSNNNKKNNNGGSTGISHASGSPLTDGNGGNSNGNSRSRSRSRKSSGTTGGLLKKPPLLVNNEAVHASVPDASHTSCNNGTLEVSINNPEPHVVDAVARHLIRNPSNSLQLQGGDITRDLYKWTNDHPSSPSQYQYPSQPALSTSIPSQAPSFSNRKRSMSFSAASIASSSHLNNNSEANGNPLAAIGLAPAPMTHEEIRAPGGFRRSFIIQKRRKHNVDAPIPNFFTRNFIEFLTLYGHFAGEDLSEEEEEEEETEEEPEEEALETESTQLVSREHGRHPHKSSTVKAVLLLLKSFVGTGVLFLPKAFHNGGWGFSALCLLSCALISYGCFVSLITTKDKVGVDGYGDMGRILYGPKMKFAILSSIALSQIGFSAAYTVFTATNLQVFSENFFHLKPGSISLATYIFAQVLIFVPLSLTRNIAKLSGTALIADLFILLGLVYVYVYSIYYIAVNGVASDTMLMFNKADWSLFIGTAIFTFEGIGLLIPIQESMKHPKHFRPSLSAVMCIVAVIFISCGLLCYAAFGSDVKTVVLLNFPQDTSYTLTVQLLYALAILLSTPLQLFPAIRILENWTFPSNASGKYNPKVKWLKNYFRCAIVVLTSILAWVGANDLDKFVSLVGSFACIPLIYIYPPLLHYKASILSGTSRARLLLDLIVIVFGVAVMAYTSWQTIKMWSQ.

Positions 1–14 are enriched in polar residues; it reads MNGKEVSSGSGRTQ. The segment at 1–71 is disordered; sequence MNGKEVSSGS…TGGLLKKPPL (71 aa). Positions 15 to 24 are enriched in low complexity; sequence SNNNKKNNNG. Polar residues predominate over residues 28 to 38; that stretch reads GISHASGSPLT. 3 positions are modified to phosphoserine: serine 59, serine 119, and serine 121. 2 disordered regions span residues 135-170 and 258-294; these read KWTN…SNRK and DLSE…GRHP. The span at 141–153 shows a compositional bias: low complexity; the sequence is PSSPSQYQYPSQP. Residues 154-167 are compositionally biased toward polar residues; sequence ALSTSIPSQAPSFS. Serine 165 is subject to Phosphoserine. Acidic residues predominate over residues 258–279; the sequence is DLSEEEEEEEETEEEPEEEALE. 11 helical membrane-spanning segments follow: residues 302 to 322, 329 to 349, 374 to 394, 412 to 432, 443 to 463, 483 to 503, 519 to 539, 561 to 581, 607 to 627, 630 to 650, and 665 to 685; these read AVLL…PKAF, FSAL…VSLI, FAIL…YTVF, GSIS…PLSL, ALIA…YSIY, WSLF…LIPI, AVMC…YAAF, VQLL…FPAI, YFRC…ANDL, FVSL…PPLL, and LLLD…TSWQ.

Belongs to the amino acid/polyamine transporter 2 family.

The protein localises to the vacuole membrane. In terms of biological role, involved in amino acid efflux from the vacuole to the cytoplasm. Capable of transporting large neutral amino acids including tyrosine, glutamine, asparagine, isoleucine and leucine. This is Vacuolar amino acid transporter 3 (AVT3) from Saccharomyces cerevisiae (strain ATCC 204508 / S288c) (Baker's yeast).